A 397-amino-acid polypeptide reads, in one-letter code: P2X purinoceptor 3 (397 aa).

Residues 1–20 (MNCISDFFTYETTKSVVVKS) lie on the Cytoplasmic side of the membrane. The helical transmembrane segment at 21-43 (WTIGIINRVVQLLIISYFVGWVF) threads the bilayer. Residues 44-322 (LHEKAYQVRD…AGKFNIIPTI (279 aa)) are Extracellular-facing. Residues lysine 63 and lysine 65 each contribute to the ATP site. 3 cysteine pairs are disulfide-bonded: cysteine 107/cysteine 153, cysteine 116/cysteine 137, and cysteine 122/cysteine 147. Glutamate 111 is a binding site for Mg(2+). N-linked (GlcNAc...) asparagine glycosylation occurs at asparagine 139. Residue aspartate 158 coordinates Mg(2+). Aspartate 158 serves as a coordination point for Ca(2+). Asparagine 170 carries N-linked (GlcNAc...) asparagine glycosylation. Position 172 (threonine 172) interacts with ATP. Asparagine 194 is a glycosylation site (N-linked (GlcNAc...) asparagine). Cystine bridges form between cysteine 203/cysteine 213 and cysteine 247/cysteine 256. The ATP site is built by serine 275, asparagine 279, and arginine 281. N-linked (GlcNAc...) asparagine glycosylation occurs at asparagine 290. Lysine 299 contacts ATP. A helical transmembrane segment spans residues 323 to 341 (ISSVAAFTSVGVGTVLCDI). Residues 342-397 (ILLNFLKGADQYKAKKFEEVNETTLKIAALTNPVYPSDQTTAEKQSTDSGAFSIGH) lie on the Cytoplasmic side of the membrane. Residues 378–391 (SDQTTAEKQSTDSG) are compositionally biased toward polar residues. The interval 378 to 397 (SDQTTAEKQSTDSGAFSIGH) is disordered.

Belongs to the P2X receptor family. In terms of assembly, homotrimer. Forms heterotrimer with P2RX2. Heterotrimeric P2RX2/3 has a ligand dose-response profile that is distinct from either homotrimeric P2RX2 or P2RX3.

It is found in the cell membrane. The catalysed reaction is Ca(2+)(in) = Ca(2+)(out). It carries out the reaction Na(+)(in) = Na(+)(out). With respect to regulation, has high sensitivity to ATP. Fast activation by external ATP. Exhibits rapid desensitization. Sensitives to the ATP agonist:alpha/beta-methylene-ATP. Subject to allosteric inhibition by AF-219. Mg(2+) and Ca(2+) slow deactivation of P2RX3. In terms of biological role, extracellular ATP-activated non-selective cation channel. Plays particularly important role in sensory neurons where its activation is critical for gustatory, nociceptive responses, visceral reflexes and sensory hypersensitization. The polypeptide is P2X purinoceptor 3 (P2RX3) (Homo sapiens (Human)).